Consider the following 426-residue polypeptide: Glutamate-1-semialdehyde 2,1-aminomutase (426 aa).

An N6-(pyridoxal phosphate)lysine modification is found at Lys-265.

Belongs to the class-III pyridoxal-phosphate-dependent aminotransferase family. HemL subfamily. As to quaternary structure, homodimer. Requires pyridoxal 5'-phosphate as cofactor.

Its subcellular location is the cytoplasm. The enzyme catalyses (S)-4-amino-5-oxopentanoate = 5-aminolevulinate. It participates in porphyrin-containing compound metabolism; protoporphyrin-IX biosynthesis; 5-aminolevulinate from L-glutamyl-tRNA(Glu): step 2/2. The chain is Glutamate-1-semialdehyde 2,1-aminomutase from Salmonella agona (strain SL483).